A 208-amino-acid chain; its full sequence is Holliday junction branch migration complex subunit RuvA (208 aa).

Positions 1–63 are domain I; that stretch reads MIGMLTGRVE…QDSVTLYGFL (63 aa). The interval 64–142 is domain II; sequence DRDSKRVFLQ…LNQSDDASAG (79 aa). Residues 143 to 151 are flexible linker; it reads NAPYQPTVD. Positions 151-208 are domain III; sequence DAGVEQVVEGLVSLGWRQQDAQRAVNEACAENDVPMPLASDDAPRVLRLALARMDRGR.

Belongs to the RuvA family. Homotetramer. Forms an RuvA(8)-RuvB(12)-Holliday junction (HJ) complex. HJ DNA is sandwiched between 2 RuvA tetramers; dsDNA enters through RuvA and exits via RuvB. An RuvB hexamer assembles on each DNA strand where it exits the tetramer. Each RuvB hexamer is contacted by two RuvA subunits (via domain III) on 2 adjacent RuvB subunits; this complex drives branch migration. In the full resolvosome a probable DNA-RuvA(4)-RuvB(12)-RuvC(2) complex forms which resolves the HJ.

It localises to the cytoplasm. Its function is as follows. The RuvA-RuvB-RuvC complex processes Holliday junction (HJ) DNA during genetic recombination and DNA repair, while the RuvA-RuvB complex plays an important role in the rescue of blocked DNA replication forks via replication fork reversal (RFR). RuvA specifically binds to HJ cruciform DNA, conferring on it an open structure. The RuvB hexamer acts as an ATP-dependent pump, pulling dsDNA into and through the RuvAB complex. HJ branch migration allows RuvC to scan DNA until it finds its consensus sequence, where it cleaves and resolves the cruciform DNA. The sequence is that of Holliday junction branch migration complex subunit RuvA from Bifidobacterium longum subsp. infantis (strain ATCC 15697 / DSM 20088 / JCM 1222 / NCTC 11817 / S12).